The primary structure comprises 253 residues: Triosephosphate isomerase (253 aa).

Position 9-11 (9-11) interacts with substrate; sequence NWK. His-95 serves as the catalytic Electrophile. The Proton acceptor role is filled by Glu-167. Substrate-binding positions include Gly-173, Ser-213, and 234 to 235; that span reads GG. Position 213 is a phosphoserine (Ser-213).

It belongs to the triosephosphate isomerase family. Homodimer.

The protein localises to the cytoplasm. It catalyses the reaction D-glyceraldehyde 3-phosphate = dihydroxyacetone phosphate. It participates in carbohydrate biosynthesis; gluconeogenesis. The protein operates within carbohydrate degradation; glycolysis; D-glyceraldehyde 3-phosphate from glycerone phosphate: step 1/1. Its function is as follows. Involved in the gluconeogenesis. Catalyzes stereospecifically the conversion of dihydroxyacetone phosphate (DHAP) to D-glyceraldehyde-3-phosphate (G3P). This Bacillus subtilis (strain 168) protein is Triosephosphate isomerase.